A 334-amino-acid polypeptide reads, in one-letter code: N-acetyl-gamma-glutamyl-phosphate reductase (334 aa).

C154 is a catalytic residue.

This sequence belongs to the NAGSA dehydrogenase family. Type 1 subfamily.

The protein localises to the cytoplasm. The enzyme catalyses N-acetyl-L-glutamate 5-semialdehyde + phosphate + NADP(+) = N-acetyl-L-glutamyl 5-phosphate + NADPH + H(+). It participates in amino-acid biosynthesis; L-arginine biosynthesis; N(2)-acetyl-L-ornithine from L-glutamate: step 3/4. Functionally, catalyzes the NADPH-dependent reduction of N-acetyl-5-glutamyl phosphate to yield N-acetyl-L-glutamate 5-semialdehyde. The chain is N-acetyl-gamma-glutamyl-phosphate reductase from Vibrio parahaemolyticus serotype O3:K6 (strain RIMD 2210633).